The following is a 201-amino-acid chain: Large ribosomal subunit protein eL15B (201 aa).

Residues Ser-161–Asn-182 form a disordered region. The segment covering Lys-169 to Arg-179 has biased composition (basic residues). Ser-183 bears the Phosphoserine mark.

The protein belongs to the eukaryotic ribosomal protein eL15 family. As to quaternary structure, component of the large ribosomal subunit (LSU). Mature yeast ribosomes consist of a small (40S) and a large (60S) subunit. The 40S small subunit contains 1 molecule of ribosomal RNA (18S rRNA) and at least 33 different proteins. The large 60S subunit contains 3 rRNA molecules (25S, 5.8S and 5S rRNA) and at least 46 different proteins.

The protein localises to the cytoplasm. It localises to the nucleus. It is found in the nucleolus. Component of the ribosome, a large ribonucleoprotein complex responsible for the synthesis of proteins in the cell. The small ribosomal subunit (SSU) binds messenger RNAs (mRNAs) and translates the encoded message by selecting cognate aminoacyl-transfer RNA (tRNA) molecules. The large subunit (LSU) contains the ribosomal catalytic site termed the peptidyl transferase center (PTC), which catalyzes the formation of peptide bonds, thereby polymerizing the amino acids delivered by tRNAs into a polypeptide chain. The nascent polypeptides leave the ribosome through a tunnel in the LSU and interact with protein factors that function in enzymatic processing, targeting, and the membrane insertion of nascent chains at the exit of the ribosomal tunnel. This is Large ribosomal subunit protein eL15B (rpl1502) from Schizosaccharomyces pombe (strain 972 / ATCC 24843) (Fission yeast).